We begin with the raw amino-acid sequence, 258 residues long: Short-chain dehydrogenase/reductase FrzI (258 aa).

NADP(+) contacts are provided by Ile-21, Asn-41, and Asn-94. Active-site proton donor residues include Ser-143 and Ser-144. NADP(+)-binding residues include Tyr-157, Lys-161, Val-191, and Thr-193. The active-site Proton acceptor is the Tyr-157. Residue Lys-161 is the Lowers pKa of active site Tyr of the active site.

Belongs to the short-chain dehydrogenases/reductases (SDR) family.

The catalysed reaction is (1S,3S,6S,7S,8R)-7-hydroxy-6-[(4-methoxyphenyl)methyl]-3-(methylamino)-5-azatricyclo[6.3.1.0(1,5)]dodecan-9-one + NADPH + H(+) = (1S,3S,6S,7S,8S,9S)-6-[(4-methoxyphenyl)methyl]-3-(methylamino)-5-azatricyclo[6.3.1.0(1,5)]dodecane-7,9-diol + NADP(+). It functions in the pathway secondary metabolite biosynthesis. Short-chain dehydrogenase/reductase; part of the gene cluster that mediates the biosynthesis of the alkaloid (-)-FR901483, a potent immunosuppressant that shows efficacy in animal models and a probable inhibitor of purine nucleotide biosynthesis by targeting phosphoribosylpyrophosphate amidotransferase (PPAT). Within the pathway, FrzI catalyzes the formation of dephospho-(-)-FR901483 from the aza-tricyclic intermediate produced by FrzH. The biosynthesis of (-)-FR901483 starts with the condensation of two L-tyrosines to yield (S,S)-dityrosyl-piperazine. This process occurs in 3 steps with the non-canonical nonribosomal peptide synthetase FrzA catalyzing the reduction of L-tyrosine into L-tyrosinal, the spontaneous condensation of 2 L-tyrosinal units, and the subsequent reduction by the NmrA-like family domain-containing oxidoreductase FrzB. The cytochrome P450 monooxygenase FrzC then performs coupling between N10 and C1' to morph the piperazine into a 1,4-diazabicyclo[3.2.1]octane spiro-fused to a 2,5-cyclohexadienone. The dienone portion is further reduced to cyclohexanone by the flavin-dependent reductase FrzD. The methyltranserases (MTs) FrzE and FrzF are then involved in the methylation at the C10' amine and the C4 phenolic oxygen, respectively. The order of the two MTs appear to be interchangeable. Cleavage of the C9-N10' bond by the dioxygenase FrzG then leads to formation of a conjugated iminium. In addition to the oxidation of C9, an additional dehydrogenation between C7 and C8 can occur to give a likely shunt product. The next biosynthetic step is the intramolecular aldol condensation catalyzed by the newly identified aldolase FrzH to yield an aza-tricyclic product with the formation of a C9-C3' bond. The short-chain dehydrogenase/reductase FrzI then produces dephospho-(-)-FR901483 that is phosphorylated at C4'-OH into (-)-FR901483 by the phosphotransferase FrzJ. The polypeptide is Short-chain dehydrogenase/reductase FrzI (Cladobotryum sp).